A 444-amino-acid chain; its full sequence is tRNA-2-methylthio-N(6)-dimethylallyladenosine synthase (444 aa).

Residues 4–120 (PTYYTITFGC…LGDLLAQVEA (117 aa)) form the MTTase N-terminal domain. [4Fe-4S] cluster-binding residues include C13, C49, C83, C155, C159, and C162. The 232-residue stretch at 141-372 (RDSQVTAWIN…RLVAEVAAAR (232 aa)) folds into the Radical SAM core domain. A TRAM domain is found at 374–438 (ARLLGQVQEV…AFSLTGEAVT (65 aa)).

The protein belongs to the methylthiotransferase family. MiaB subfamily. Monomer. Requires [4Fe-4S] cluster as cofactor.

It is found in the cytoplasm. It catalyses the reaction N(6)-dimethylallyladenosine(37) in tRNA + (sulfur carrier)-SH + AH2 + 2 S-adenosyl-L-methionine = 2-methylsulfanyl-N(6)-dimethylallyladenosine(37) in tRNA + (sulfur carrier)-H + 5'-deoxyadenosine + L-methionine + A + S-adenosyl-L-homocysteine + 2 H(+). Functionally, catalyzes the methylthiolation of N6-(dimethylallyl)adenosine (i(6)A), leading to the formation of 2-methylthio-N6-(dimethylallyl)adenosine (ms(2)i(6)A) at position 37 in tRNAs that read codons beginning with uridine. This Synechococcus sp. (strain JA-2-3B'a(2-13)) (Cyanobacteria bacterium Yellowstone B-Prime) protein is tRNA-2-methylthio-N(6)-dimethylallyladenosine synthase.